The chain runs to 162 residues: Probable cytosine deaminase (162 aa).

In terms of domain architecture, CMP/dCMP-type deaminase spans 8–132 (EKDLAYLREA…PLYINSRDIL (125 aa)). H59 contributes to the Zn(2+) binding site. E61 serves as the catalytic Proton donor. The Zn(2+) site is built by C87 and C90. D159 contacts substrate.

Belongs to the cytidine and deoxycytidylate deaminase family. Homodimer. Requires Zn(2+) as cofactor.

It is found in the cytoplasm. The protein resides in the nucleus. It carries out the reaction cytosine + H2O + H(+) = uracil + NH4(+). Its pathway is pyrimidine metabolism; UMP biosynthesis via salvage pathway; uracil from cytosine: step 1/1. Its function is as follows. Catalyzes the hydrolytic deamination of cytosine to uracil or 5-methylcytosine to thymine. Is involved in the pyrimidine salvage pathway, which allows the cell to utilize cytosine for pyrimidine nucleotide synthesis. This is Probable cytosine deaminase from Schizosaccharomyces pombe (strain 972 / ATCC 24843) (Fission yeast).